The chain runs to 703 residues: Epidermal growth factor receptor (703 aa).

Residues 1–30 form the signal peptide; the sequence is MGVRSPLSASGPRGAAVLVLLLLGVALCSA. Topologically, residues 31-654 are extracellular; it reads VEEKKVCQGT…GCPNGSKTPS (624 aa). Residues Cys-37 and Cys-64 are joined by a disulfide bond. Asn-134, Asn-190, and Asn-200 each carry an N-linked (GlcNAc...) asparagine glycan. Cystine bridges form between Cys-164–Cys-194, Cys-197–Cys-206, Cys-201–Cys-214, Cys-222–Cys-230, Cys-226–Cys-238, Cys-239–Cys-247, Cys-243–Cys-255, Cys-258–Cys-267, Cys-271–Cys-298, Cys-302–Cys-314, Cys-318–Cys-333, Cys-336–Cys-340, and Cys-344–Cys-369. N-linked (GlcNAc...) asparagine glycosylation is found at Asn-359, Asn-368, and Asn-420. 11 disulfides stabilise this stretch: Cys-477–Cys-506, Cys-513–Cys-522, Cys-517–Cys-530, Cys-533–Cys-542, Cys-546–Cys-562, Cys-565–Cys-581, Cys-569–Cys-589, Cys-592–Cys-601, Cys-605–Cys-627, Cys-630–Cys-638, and Cys-634–Cys-646. Asn-573 and Asn-578 each carry an N-linked (GlcNAc...) asparagine glycan. 2 N-linked (GlcNAc...) asparagine glycosylation sites follow: Asn-613 and Asn-633. An N-linked (GlcNAc...) asparagine glycan is attached at Asn-648. Residues 655–667 traverse the membrane as a helical segment; the sequence is IAAGVVGGLLCLV. Residues 668–703 lie on the Cytoplasmic side of the membrane; the sequence is VVGLGIGLYLRRRHIVRKRTLRRLLQERELVEPLTP. A phosphothreonine mark is found at Thr-687 and Thr-702.

This sequence belongs to the protein kinase superfamily. Tyr protein kinase family. EGF receptor subfamily. Binding of the ligand triggers homo- and/or heterodimerization of the receptor triggering its autophosphorylation. Phosphorylated. Autophosphorylates.

The protein resides in the cell membrane. It localises to the endoplasmic reticulum membrane. It is found in the golgi apparatus membrane. The protein localises to the nucleus membrane. Its subcellular location is the endosome. The protein resides in the endosome membrane. It localises to the nucleus. It carries out the reaction L-tyrosyl-[protein] + ATP = O-phospho-L-tyrosyl-[protein] + ADP + H(+). Its activity is regulated as follows. Endocytosis and inhibition of the activated EGFR by phosphatases constitute immediate regulatory mechanisms. Moreover, inducible feedback inhibitors may constitute alternative regulatory mechanisms for the EGFR signaling. Its function is as follows. Receptor tyrosine kinase binding ligands of the EGF family and activating several signaling cascades to convert extracellular cues into appropriate cellular responses. Known ligands include EGF and TGFA/TGF-alpha. Ligand binding triggers receptor homo- and/or heterodimerization and autophosphorylation on key cytoplasmic residues. The phosphorylated receptor recruits adapter proteins like GRB2 which in turn activates complex downstream signaling cascades. Activates at least 4 major downstream signaling cascades including the RAS-RAF-MEK-ERK, PI3 kinase-AKT, PLCgamma-PKC and STATs modules. May also activate the NF-kappa-B signaling cascade. This Gallus gallus (Chicken) protein is Epidermal growth factor receptor (EGFR).